Here is an 89-residue protein sequence, read N- to C-terminus: UPF0367 protein CYA_1023 (89 aa).

The segment at 69–89 is disordered; sequence TKSGGPGAPGTRPGFLAQLQG.

It belongs to the UPF0367 family.

This chain is UPF0367 protein CYA_1023, found in Synechococcus sp. (strain JA-3-3Ab) (Cyanobacteria bacterium Yellowstone A-Prime).